The following is a 276-amino-acid chain: UPF0761 membrane protein APL_1950 (276 aa).

The next 7 membrane-spanning stretches (helical) occupy residues 33 to 53 (TLAI…FPIF), 90 to 110 (MGIV…QSID), 125 to 145 (IFIS…LAGG), 147 to 167 (IAIS…LLSF), 171 to 191 (LLQY…YWLV), 203 to 223 (LGAI…VWYI), and 239 to 259 (LPIM…GGLI).

The protein belongs to the UPF0761 family.

It localises to the cell inner membrane. The protein is UPF0761 membrane protein APL_1950 of Actinobacillus pleuropneumoniae serotype 5b (strain L20).